A 921-amino-acid polypeptide reads, in one-letter code: Valine--tRNA ligase (921 aa).

A 'HIGH' region motif is present at residues 40-50 (PNVTGSLHMGH). Residues 522–526 (KMSKS) carry the 'KMSKS' region motif. Lysine 525 is a binding site for ATP. Residues 849-921 (MADLIDKEAE…LQHKNRIESL (73 aa)) adopt a coiled-coil conformation.

This sequence belongs to the class-I aminoacyl-tRNA synthetase family. ValS type 1 subfamily. As to quaternary structure, monomer.

The protein resides in the cytoplasm. The catalysed reaction is tRNA(Val) + L-valine + ATP = L-valyl-tRNA(Val) + AMP + diphosphate. Its function is as follows. Catalyzes the attachment of valine to tRNA(Val). As ValRS can inadvertently accommodate and process structurally similar amino acids such as threonine, to avoid such errors, it has a 'posttransfer' editing activity that hydrolyzes mischarged Thr-tRNA(Val) in a tRNA-dependent manner. This is Valine--tRNA ligase from Legionella pneumophila (strain Paris).